The sequence spans 542 residues: Homeobox protein ceh-18 (542 aa).

The segment covering 243–252 has biased composition (polar residues); that stretch reads NTPTQPTASL. Positions 243–264 are disordered; it reads NTPTQPTASLTPKKAENRPPVV. In terms of domain architecture, POU-specific spans 290–364; that stretch reads DDRIDMNELE…LLKEWLADVE (75 aa). A DNA-binding region (homeobox) is located at residues 421 to 480; sequence RRRKRTNLDMNQRNALDTFFALNPRPDHDKMTDIANSLELDRDVVRVWFCNRRQKMRRVD. The segment at 514–542 is disordered; the sequence is LASCQASNDDSDGTSGSPDAPSNDGCSDL. Residues 517-530 show a composition bias toward polar residues; the sequence is CQASNDDSDGTSGS.

This sequence belongs to the POU transcription factor family. Interacts with akir-1. In terms of tissue distribution, expressed in the gonadal sheath cells that signal the oocyte, but not in the oocyte.

It localises to the nucleus. Functionally, directs gonadal sheath cell differentiation and function. Also directs gonad migration and plays a role in specifying the differentiated phenotypes of epidermal cells during postembryonic development. Plays a role in oogenesis, regulating a sheath cell signal that causes oocytes to maintain diakinesis arrest during meiosis. Negatively regulates oocyte maturation, ovulation and MAPK activation in oocytes when sperm are not available for fertilization. May be recruited by akir-1 to the promoter regions of antimicrobial peptide genes to control gene expression in response to fungal infection. The protein is Homeobox protein ceh-18 of Caenorhabditis elegans.